Consider the following 669-residue polypeptide: Putative heme-binding protein rrnAC3100 (669 aa).

A heme-binding site is contributed by histidine 181. Disordered regions lie at residues arginine 260–serine 351 and leucine 451–glutamine 477. Residues glycine 579–phenylalanine 667 form the ABM domain.

It in the N-terminal section; belongs to the ChdC family.

The protein is Putative heme-binding protein rrnAC3100 of Haloarcula marismortui (strain ATCC 43049 / DSM 3752 / JCM 8966 / VKM B-1809) (Halobacterium marismortui).